We begin with the raw amino-acid sequence, 75 residues long: DNA-directed RNA polymerase subunit epsilon (75 aa).

Belongs to the RNA polymerase subunit epsilon family. In terms of assembly, RNAP is composed of a core of 2 alpha, a beta and a beta' subunit. The core is associated with a delta subunit, and at least one of epsilon or omega. When a sigma factor is associated with the core the holoenzyme is formed, which can initiate transcription.

It carries out the reaction RNA(n) + a ribonucleoside 5'-triphosphate = RNA(n+1) + diphosphate. Functionally, a non-essential component of RNA polymerase (RNAP). The protein is DNA-directed RNA polymerase subunit epsilon of Lactobacillus johnsonii (strain CNCM I-12250 / La1 / NCC 533).